The sequence spans 157 residues: uncharacterized protein (157 aa).

This is an uncharacterized protein from Aquifex aeolicus (strain VF5).